The primary structure comprises 375 residues: AVTNLSNVLKNGNDNFTARMFTEVVKNNPGKSIVLSAFSVLPPLAQLALASDGETHEELLKAIGFPDDDAIRTEFASKSRDLRSIKGVELKMANKVYVHDGGKLDENFAVVSRDVFNSDVQNIDFSKNTVAAKSINDWVEENTNNRIKDLVNPDSLSSATAAVLVNAIYFKGAWSSKFDERLTSDRDFYVSKDKTIKVPMMYKRGDYKYGESAVLNAQLIEIPYKGDQSSLIVVLPKDKDGITQLQEALKDPKTLETAQQSMYSTEVDLYLPKFKIETETNLKDVLSNMNVNKIFNNDAQITRLLKGESLSVSEAIQKAFIEINEEGAEAAAANAFAVVFMSAVVSQPLVFKANHPFVFFLKGDGVTLFNGVFHP.

Belongs to the serpin family. In terms of tissue distribution, hemolymph.

The protein resides in the secreted. The protein is Antichymotrypsin-2 of Bombyx mori (Silk moth).